The following is an 874-amino-acid chain: MKTTSEIRQSFLDFFHSKGHTVVPSSSLVPENDPTLLFTNAGMNQFKDVFLGLEKRPYTRATTAQRCVRAGGKHNDLENVGYTARHHTFFEMMGNFSFGDYFKHDAIQFGWEYLTSPQWLGLPKEKLYVTVYETDDEAYDIWNKIVGVPTDHIIRIGDNKGAPYASDNFWAMGDTGPCGPCTEIFYDHGETFWGGLPGSPEEDGDRYIEVWNIVFMQFNRLADGTMEKLPKPSVDTGMGLERMTAVMQHVNSNYETDIFQTLIKEVAGLLNVSDLDNKSLRVVADHIRACSYLIADGVVPSNEGRGYVLRRIIRRAVRHGNLLGAKEAFFYKLVPTLATVMGHAGEVLTQKQAHIQKTLKAEEEQFARTLERGLALLEDALTKVENNTLSGEVAFKLYDTYGFPLDLTADVCRERELTIDEAGFEAEMTAQRERAKASSNFGTDYNNVIKVEGQTDFIGYDNLEAQATIVGLFSNGKAVDTIQSGESAVIILDQTSFYAEMGGQVGDSGLISTEICNFAVNDTQKYGQVFGHIGQLTSGSLSIGDKVTATVHATRRIAITANHSATHLLHSALREVLGDHVAQKGSLVSENILRFDFSQPEAISKSQLEEIERIVNRKIRENIQVTIETMDIESAKKKGAMALFGEKYGDVVRVVGMTEFSIELCGGTHVQRTGDIGLFKLVSEGAVAAGIRRVEAVTAETAIEWLHNQQKVLQQSAEFLKADSNSLVEKIQQLQDKAKRTEKELQQLKDKLAAQAGSELVKQANKINGVNVVVQKLENVEVKSLRTMVDDLKNQLESAIVVFGTVADEKVNLIVGVTKDLSSKVNAGELVGAMAQQVGGKGGGRADMAMAGGSEPQNLDNALKFAEEWIQAKL.

Residues H563, H567, C665, and H669 each contribute to the Zn(2+) site.

Belongs to the class-II aminoacyl-tRNA synthetase family. Zn(2+) is required as a cofactor.

The protein localises to the cytoplasm. It catalyses the reaction tRNA(Ala) + L-alanine + ATP = L-alanyl-tRNA(Ala) + AMP + diphosphate. Its function is as follows. Catalyzes the attachment of alanine to tRNA(Ala) in a two-step reaction: alanine is first activated by ATP to form Ala-AMP and then transferred to the acceptor end of tRNA(Ala). Also edits incorrectly charged Ser-tRNA(Ala) and Gly-tRNA(Ala) via its editing domain. The protein is Alanine--tRNA ligase of Actinobacillus pleuropneumoniae serotype 5b (strain L20).